We begin with the raw amino-acid sequence, 341 residues long: C2 calcium-dependent domain-containing protein 4D (341 aa).

A compositionally biased stretch (basic and acidic residues) spans 56 to 71; sequence RLRDPRGAEGRVDRNP. Disordered stretches follow at residues 56–75 and 134–176; these read RLRDPRGAEGRVDRNPGGRN and CRAP…PYAP. Low complexity predominate over residues 139-149; that stretch reads SDTASSPDSSP. Residues 205–331 enclose the C2 domain; that stretch reads RGGQLRLSTE…PPLAGGLGPG (127 aa).

This Mus musculus (Mouse) protein is C2 calcium-dependent domain-containing protein 4D (C2cd4d).